The chain runs to 283 residues: MQVLKEKLLIHQQVDNWRKDGNRIAFVPTMGNLHEGHFSLVREAKRHAEKVVVSIFVNPMQFNNPQDLLLYPRTMDQDCSQLQNLGVDLVYAPTVEELYPEGSQDITFVDVPKLSTMLEGASRPGHFRGVTTVVSKLFHIVNPDVACFGEKDFQQVAIIKKMVRDLNFFIEIIQVPIVRADDGLALSSRNGYLTSEERKIAPNLYKILKKLAQELSNGNGDLEKLIAETNTELSRCRFIPDQLEICDSTTLEPFTAGTKNVVILAAAWLGKARLIDNIQTTIN.

This sequence belongs to the pantothenate synthetase family.

It carries out the reaction (R)-pantoate + beta-alanine + ATP = (R)-pantothenate + AMP + diphosphate + H(+). It participates in cofactor biosynthesis; (R)-pantothenate biosynthesis; (R)-pantothenate from (R)-pantoate and beta-alanine: step 1/1. The polypeptide is Pantoate--beta-alanine ligase (pan6) (Schizosaccharomyces pombe (strain 972 / ATCC 24843) (Fission yeast)).